The primary structure comprises 177 residues: Chorismate pyruvate-lyase (177 aa).

Methionine 36, arginine 78, leucine 116, and glutamate 157 together coordinate substrate.

It belongs to the UbiC family. Monomer.

It localises to the cytoplasm. The enzyme catalyses chorismate = 4-hydroxybenzoate + pyruvate. It functions in the pathway cofactor biosynthesis; ubiquinone biosynthesis. Functionally, removes the pyruvyl group from chorismate, with concomitant aromatization of the ring, to provide 4-hydroxybenzoate (4HB) for the ubiquinone pathway. The chain is Chorismate pyruvate-lyase from Pectobacterium atrosepticum (strain SCRI 1043 / ATCC BAA-672) (Erwinia carotovora subsp. atroseptica).